The chain runs to 275 residues: MAIVKVKPTSPGRRAMVKVVNKDLHKGKPHAALLDTQNSKAGRNNNGRITTRHQGGGHKHHYRVIDFRRTKDGIPAKVERLEYDPNRSANIALVLYADGERRYIIAPKGVTVGQQLMSGSEAPIRAGNTLPIRNIPVGTTIHCIEMLPGKGAQMARSAGTSAMLLAREGVYAQVRLRSGEIRRVHIECRATIGEVGNEEHSLRQIGKAGANRWRGIRPTVRGVAMNPIDHPHGGGEGRTAAGRDPVSPWGTPTKGFRTRRNKRTTTMIVQRRHKR.

Positions 38–53 (NSKAGRNNNGRITTRH) are enriched in polar residues. Disordered regions lie at residues 38–59 (NSKAGRNNNGRITTRHQGGGHK) and 224–257 (AMNPIDHPHGGGEGRTAAGRDPVSPWGTPTKGFR).

This sequence belongs to the universal ribosomal protein uL2 family. Part of the 50S ribosomal subunit. Forms a bridge to the 30S subunit in the 70S ribosome.

One of the primary rRNA binding proteins. Required for association of the 30S and 50S subunits to form the 70S ribosome, for tRNA binding and peptide bond formation. It has been suggested to have peptidyltransferase activity; this is somewhat controversial. Makes several contacts with the 16S rRNA in the 70S ribosome. This chain is Large ribosomal subunit protein uL2, found in Burkholderia thailandensis (strain ATCC 700388 / DSM 13276 / CCUG 48851 / CIP 106301 / E264).